The chain runs to 240 residues: Ubiquinone biosynthesis O-methyltransferase (240 aa).

Residues Arg-44, Gly-64, Asp-85, and Met-129 each contribute to the S-adenosyl-L-methionine site.

Belongs to the methyltransferase superfamily. UbiG/COQ3 family.

The catalysed reaction is a 3-demethylubiquinol + S-adenosyl-L-methionine = a ubiquinol + S-adenosyl-L-homocysteine + H(+). It catalyses the reaction a 3-(all-trans-polyprenyl)benzene-1,2-diol + S-adenosyl-L-methionine = a 2-methoxy-6-(all-trans-polyprenyl)phenol + S-adenosyl-L-homocysteine + H(+). Its pathway is cofactor biosynthesis; ubiquinone biosynthesis. In terms of biological role, O-methyltransferase that catalyzes the 2 O-methylation steps in the ubiquinone biosynthetic pathway. The sequence is that of Ubiquinone biosynthesis O-methyltransferase from Escherichia coli O81 (strain ED1a).